The sequence spans 45 residues: Large ribosomal subunit protein bL34 (45 aa).

The disordered stretch occupies residues 1–45 (MTKRTFGGTSRKRKRVSGFRVRMRSHTGRRVIRTRRKRGRSRLAA). Basic residues predominate over residues 10–45 (SRKRKRVSGFRVRMRSHTGRRVIRTRRKRGRSRLAA).

It belongs to the bacterial ribosomal protein bL34 family.

The chain is Large ribosomal subunit protein bL34 from Synechococcus sp. (strain CC9311).